The chain runs to 79 residues: DNA gyrase inhibitor YacG (79 aa).

Residues Cys7, Cys10, Cys26, and Cys30 each coordinate Zn(2+).

The protein belongs to the DNA gyrase inhibitor YacG family. In terms of assembly, interacts with GyrB. The cofactor is Zn(2+).

In terms of biological role, inhibits all the catalytic activities of DNA gyrase by preventing its interaction with DNA. Acts by binding directly to the C-terminal domain of GyrB, which probably disrupts DNA binding by the gyrase. This is DNA gyrase inhibitor YacG from Shewanella pealeana (strain ATCC 700345 / ANG-SQ1).